The following is a 249-amino-acid chain: MVRYKATISYDGTLFSGFQRQRHLRTVQEEIEKTLYKLNNGTKIIIHGAGRTDAGVHAYGQVIHFDLPQEQEVEKLRFALDTQTPEDIDVVNIEKVADDFHCRYQKHLKTYEFLVDNGRPKNPMMRHYTTHYPYTLNIKLMQEAINGLVGTHDFTGFTAAGTSVQNKVRTITKATVSRDEKTDFLVFTFSGNGFLYKQVRNMVGTLLKIGNGQMPVEQVKVILSSKNRQLAGPTISGNGLYLKEICYEN.

Aspartate 53 serves as the catalytic Nucleophile. Position 111 (tyrosine 111) interacts with substrate.

This sequence belongs to the tRNA pseudouridine synthase TruA family. As to quaternary structure, homodimer.

It catalyses the reaction uridine(38/39/40) in tRNA = pseudouridine(38/39/40) in tRNA. Functionally, formation of pseudouridine at positions 38, 39 and 40 in the anticodon stem and loop of transfer RNAs. The sequence is that of tRNA pseudouridine synthase A from Streptococcus pyogenes serotype M1.